Reading from the N-terminus, the 597-residue chain is Kelch-like protein 21 (597 aa).

Residues 35–103 (LDVTLEAAGG…SYTGRVAVSG (69 aa)) enclose the BTB domain. The BACK domain maps to 138–239 (CLDMQDFAEA…RRFYLLAHVE (102 aa)). Kelch repeat units follow at residues 287 to 335 (ILVL…ALGN), 336 to 382 (DIYV…VLDG), 384 to 422 (LYVV…ACRG), 423 to 470 (RLYA…TLNG), 472 to 512 (MYFV…VLGG), and 513 to 560 (KLYV…SIFR). Residues 570–597 (GRGFELDSGSDDMDPGRPRPPRDPDELH) form a disordered region. Positions 583–597 (DPGRPRPPRDPDELH) are enriched in basic and acidic residues.

In terms of assembly, component of the BCR(KLHL21) E3 ubiquitin ligase complex, at least composed of CUL3, KLHL21 and RBX1.

The protein resides in the cytoplasm. It is found in the cytoskeleton. The protein localises to the spindle. It functions in the pathway protein modification; protein ubiquitination. In terms of biological role, substrate-specific adapter of a BCR (BTB-CUL3-RBX1) E3 ubiquitin-protein ligase complex required for efficient chromosome alignment and cytokinesis. The BCR(KLHL21) E3 ubiquitin ligase complex regulates localization of the chromosomal passenger complex (CPC) from chromosomes to the spindle midzone in anaphase and mediates the ubiquitination of AURKB. Ubiquitination of AURKB by BCR(KLHL21) E3 ubiquitin ligase complex may not lead to its degradation by the proteasome. The polypeptide is Kelch-like protein 21 (KLHL21) (Homo sapiens (Human)).